A 79-amino-acid chain; its full sequence is DNA-directed RNA polymerase subunit omega (79 aa).

The protein belongs to the RNA polymerase subunit omega family. The RNAP catalytic core consists of 2 alpha, 1 beta, 1 beta' and 1 omega subunit. When a sigma factor is associated with the core the holoenzyme is formed, which can initiate transcription.

It catalyses the reaction RNA(n) + a ribonucleoside 5'-triphosphate = RNA(n+1) + diphosphate. Its function is as follows. Promotes RNA polymerase assembly. Latches the N- and C-terminal regions of the beta' subunit thereby facilitating its interaction with the beta and alpha subunits. The chain is DNA-directed RNA polymerase subunit omega from Thermotoga neapolitana (strain ATCC 49049 / DSM 4359 / NBRC 107923 / NS-E).